The following is a 257-amino-acid chain: Undecaprenyl-diphosphatase (257 aa).

Helical transmembrane passes span 42 to 62, 76 to 96, 103 to 123, 136 to 156, 172 to 192, 209 to 229, and 237 to 257; these read YVLF…YMFL, IFHI…LKPI, PQYL…GVYF, CLTI…RSGA, IQFS…LEIW, QFLT…WAVI, and WVYF…YFQM.

The protein belongs to the UppP family.

The protein localises to the cell inner membrane. The enzyme catalyses di-trans,octa-cis-undecaprenyl diphosphate + H2O = di-trans,octa-cis-undecaprenyl phosphate + phosphate + H(+). Functionally, catalyzes the dephosphorylation of undecaprenyl diphosphate (UPP). Confers resistance to bacitracin. This Protochlamydia amoebophila (strain UWE25) protein is Undecaprenyl-diphosphatase.